An 804-amino-acid polypeptide reads, in one-letter code: Lon protease 2 (804 aa).

Residues 6 to 199 (MPVCPVRGSV…AVLVLLEAEL (194 aa)) form the Lon N-terminal domain. Residue 362 to 369 (GPPGVGKT) coordinates ATP. Residues 598–779 (EPQVGVATGM…DQVLDLALVG (182 aa)) enclose the Lon proteolytic domain. Catalysis depends on residues S685 and K728.

This sequence belongs to the peptidase S16 family. Homohexamer. Organized in a ring with a central cavity.

It localises to the cytoplasm. The enzyme catalyses Hydrolysis of proteins in presence of ATP.. Its function is as follows. ATP-dependent serine protease that mediates the selective degradation of mutant and abnormal proteins as well as certain short-lived regulatory proteins. Required for cellular homeostasis and for survival from DNA damage and developmental changes induced by stress. Degrades polypeptides processively to yield small peptide fragments that are 5 to 10 amino acids long. Binds to DNA in a double-stranded, site-specific manner. The polypeptide is Lon protease 2 (Thermus thermophilus (strain ATCC BAA-163 / DSM 7039 / HB27)).